We begin with the raw amino-acid sequence, 504 residues long: MPLLLHPRFPSSHAAACAHRAAAAHRDARPALRLPELHATRRRRNNVACRATRAREAPPQQQNTAAALSKEAHKYFDHAVVTVRAGDGGHGAVLAMPASPSTDAPKSPRRRSDKGKRSGVKKVSYKRNYDGSVALPMGGHGGDVVVYADEAEETLLRFHEKARYCAKRGGNVGATGTLSSRMHNGFAGETLRIPVPVGTVVKRKKGAVLADLAHPGDEVIVARGGQGGISLIDVPEYRRRKAMVLSPNIMRDVSDRVLIHGQPGEEVSLELILRVVADVGLVGLPNAGKSTLLSAITLARPDIADYPFTTLMPNLGRLGGDPALGALQFSSEATLADLPGLIEGAHLGKGLGRNFLRHLRRTRVIVHVVDAAADDPVDDYKIVREELRMYNPQYLERPYVVVLNKIDLPKAQDRLSSLAFEISSIGCEECDGNNTSEDSLNGNTGEHNTSSETKVEGGEKELRDYPRPQAVVGASVLKHIGIDEMLKEIRAALRKCFDHRLPEP.

Over residues 24–39 (AHRDARPALRLPELHA) the composition is skewed to basic and acidic residues. 2 disordered regions span residues 24–46 (AHRDARPALRLPELHATRRRRNN) and 93–122 (VLAMPASPSTDAPKSPRRRSDKGKRSGVKK). One can recognise an Obg domain in the interval 73–276 (HKYFDHAVVT…VSLELILRVV (204 aa)). The segment covering 107–122 (SPRRRSDKGKRSGVKK) has biased composition (basic residues). One can recognise an OBG-type G domain in the interval 277-494 (ADVGLVGLPN…MLKEIRAALR (218 aa)). GTP-binding positions include 283–290 (GLPNAGKS) and 337–341 (DLPGL). Residues 436–452 (SEDSLNGNTGEHNTSSE) are compositionally biased toward polar residues. The disordered stretch occupies residues 436 to 463 (SEDSLNGNTGEHNTSSETKVEGGEKELR). The segment covering 453-463 (TKVEGGEKELR) has biased composition (basic and acidic residues).

Belongs to the TRAFAC class OBG-HflX-like GTPase superfamily. OBG GTPase family.

Its function is as follows. May bind GTP and have GTPase activity. The polypeptide is Probable GTP-binding protein OBGC2 (Oryza sativa subsp. japonica (Rice)).